Consider the following 285-residue polypeptide: Nucleotide-binding protein GSU1884 (285 aa).

Residue 8 to 15 (GLSGSGKS) participates in ATP binding. Residue 59–62 (DIRG) participates in GTP binding.

Belongs to the RapZ-like family.

Its function is as follows. Displays ATPase and GTPase activities. This is Nucleotide-binding protein GSU1884 from Geobacter sulfurreducens (strain ATCC 51573 / DSM 12127 / PCA).